A 161-amino-acid polypeptide reads, in one-letter code: Transcription initiation factor TFIID subunit 12 (161 aa).

Positions 15-55 (FSSIKPEPASTPPQGSMANSTAVVKIPGTPGAGGRLSPENN) are disordered. A Glycyl lysine isopeptide (Lys-Gly) (interchain with G-Cter in SUMO2) cross-link involves residue K19. A compositionally biased stretch (polar residues) spans 26–36 (PPQGSMANSTA). T43 bears the Phosphothreonine mark. S51 bears the Phosphoserine mark. T59 bears the Phosphothreonine mark. One can recognise a Histone-fold domain in the interval 59 to 126 (TKKKLQDLVR…QLHLERQWNM (68 aa)).

This sequence belongs to the TAF12 family. In terms of assembly, component of the TFIID basal transcription factor complex, composed of TATA-box-binding protein TBP, and a number of TBP-associated factors (TAFs), including TAF1, TAF2, TAF3, TAF4, TAF5, TAF6, TAF7, TAF8, TAF9, TAF10, TAF11, TAF12 and TAF13. Component of the TATA-binding protein-free TAF complex (TFTC), the PCAF histone acetylase complex and the STAGA transcription coactivator-HAT complex. Component of the PCAF complex, at least composed of TADA2L/ADA2, TADA3L/ADA3, TAF5L/PAF65-beta, SUPT3H, TAF6L, TAF9, TAF10, TAF12 and TRRAP. Component of the STAGA transcription coactivator-HAT complex, at least composed of SUPT3H, GCN5L2, TAF5L, TAF6L, STAF65-gamma/SUPT7L, TADA3L, TAD1L, TAF10, TAF12, TRRAP and TAF9. Interacts with ATF7 (via the transactivation domain); the interaction is prevented by sumoylation of ATF7. As to quaternary structure, interacts with TBP; the interaction is direct. Interacts with TAF10; the interaction is direct. Interacts with ATF7, promoting transactivation by ATF7. Does not promote the transactivation of ATF7. As to expression, ubiquitous.

The protein resides in the nucleus. Its function is as follows. The TFIID basal transcription factor complex plays a major role in the initiation of RNA polymerase II (Pol II)-dependent transcription. TFIID recognizes and binds promoters with or without a TATA box via its subunit TBP, a TATA-box-binding protein, and promotes assembly of the pre-initiation complex (PIC). The TFIID complex consists of TBP and TBP-associated factors (TAFs), including TAF1, TAF2, TAF3, TAF4, TAF5, TAF6, TAF7, TAF8, TAF9, TAF10, TAF11, TAF12 and TAF13. Component of the TATA-binding protein-free TAF complex (TFTC), the PCAF histone acetylase complex and the STAGA transcription coactivator-HAT complex. This is Transcription initiation factor TFIID subunit 12 from Homo sapiens (Human).